A 178-amino-acid chain; its full sequence is Cytochrome b6-f complex iron-sulfur subunit (178 aa).

Residues 20 to 42 (LLTFGTATGVALGALYPVANYFM) form a helical membrane-spanning segment. One can recognise a Rieske domain in the interval 65 to 161 (KTGWLANHQA…VDVDDDAVLV (97 aa)). The [2Fe-2S] cluster site is built by cysteine 107, histidine 109, cysteine 125, and histidine 128. A disulfide bridge links cysteine 112 with cysteine 127.

It belongs to the Rieske iron-sulfur protein family. In terms of assembly, the 4 large subunits of the cytochrome b6-f complex are cytochrome b6, subunit IV (17 kDa polypeptide, PetD), cytochrome f and the Rieske protein, while the 4 small subunits are PetG, PetL, PetM and PetN. The complex functions as a dimer. It depends on [2Fe-2S] cluster as a cofactor.

Its subcellular location is the cellular thylakoid membrane. It catalyses the reaction 2 oxidized [plastocyanin] + a plastoquinol + 2 H(+)(in) = 2 reduced [plastocyanin] + a plastoquinone + 4 H(+)(out). Functionally, component of the cytochrome b6-f complex, which mediates electron transfer between photosystem II (PSII) and photosystem I (PSI), cyclic electron flow around PSI, and state transitions. This chain is Cytochrome b6-f complex iron-sulfur subunit, found in Prochlorococcus marinus (strain MIT 9515).